Reading from the N-terminus, the 831-residue chain is Leucine--tRNA ligase (831 aa).

The 'HIGH' region motif lies at 36 to 46 (PYPSGKLHIGH). Residues 607-611 (KMSKS) carry the 'KMSKS' region motif. Lys610 contacts ATP.

It belongs to the class-I aminoacyl-tRNA synthetase family.

The protein resides in the cytoplasm. The catalysed reaction is tRNA(Leu) + L-leucine + ATP = L-leucyl-tRNA(Leu) + AMP + diphosphate. This Neorickettsia sennetsu (strain ATCC VR-367 / Miyayama) (Ehrlichia sennetsu) protein is Leucine--tRNA ligase.